A 360-amino-acid polypeptide reads, in one-letter code: Secreted LysM effector LysM2 (360 aa).

Residues 1–21 (MKISSLSILPLLGVVSAGIHG) form the signal peptide. Positions 37 to 85 (TWYLDLVDDSYTCENIESQWDLSHEAFVAWNPGVKKDCSGLKVGLSVCV) constitute a LysM 1 domain. Over residues 94–113 (ATPTSEASTSSETSSASPTA) the composition is skewed to low complexity. The interval 94–125 (ATPTSEASTSSETSSASPTASRPPLPSPTQDG) is disordered. The N-linked (GlcNAc...) asparagine glycan is linked to N129. The 48-residue stretch at 132–179 (KFHQAVSGDTCSKIISRYKPITLDQFIEWNPALEKDCSGLWSGYYYCV) folds into the LysM 2 domain. N204 is a glycosylation site (N-linked (GlcNAc...) asparagine). 2 LysM domains span residues 225–272 (RWHK…YYCI) and 311–357 (KWHQ…YVCV).

This sequence belongs to the secreted LysM effector family.

The protein localises to the secreted. Its subcellular location is the cell wall. Functionally, secreted effector that binds two substrates, chitin and N-linked oligosaccharides associated with human skin glycoproteins. Could provide the pathogen with three important functions including shielding host cell wall chitin from the human immune system, shielding the pathogen's glycoproteins from host degradation and immune surveillance, and helping facilitate pathogen adhesion to human skin. This chain is Secreted LysM effector LysM2, found in Trichophyton rubrum (strain ATCC MYA-4607 / CBS 118892) (Athlete's foot fungus).